Here is a 273-residue protein sequence, read N- to C-terminus: MPELPEVETLKNSLKDKLIGLIIENVELKRDNLRYKLSPLLTTEILNTNILDVRRRAKYLIIDFNNDYSLIVHLGMSGRFTLQSANYKTQKHDHVIFDLSNGEKLIFNDTRRFGMIYSFKTDLLEKEFFNDLGIEPFSDLLTLEYLKDKLQTKKIPIKNLIMDNRVIVGIGNIYASESLHLARIHPDKSGNDLRDDEIENLIKAIRDVLTKAITAGGTTLKDFVNGDNKPGYFTKQLKVYGREGQSCLSCSSTIIKIKHSGRSTFYCKTCQYS.

Proline 2 serves as the catalytic Schiff-base intermediate with DNA. Glutamate 3 acts as the Proton donor in catalysis. Catalysis depends on lysine 58, which acts as the Proton donor; for beta-elimination activity. DNA contacts are provided by histidine 92, arginine 111, and lysine 153. The FPG-type zinc-finger motif lies at 238-272 (KVYGREGQSCLSCSSTIIKIKHSGRSTFYCKTCQY). The Proton donor; for delta-elimination activity role is filled by arginine 262.

Belongs to the FPG family. As to quaternary structure, monomer. Requires Zn(2+) as cofactor.

The enzyme catalyses Hydrolysis of DNA containing ring-opened 7-methylguanine residues, releasing 2,6-diamino-4-hydroxy-5-(N-methyl)formamidopyrimidine.. It carries out the reaction 2'-deoxyribonucleotide-(2'-deoxyribose 5'-phosphate)-2'-deoxyribonucleotide-DNA = a 3'-end 2'-deoxyribonucleotide-(2,3-dehydro-2,3-deoxyribose 5'-phosphate)-DNA + a 5'-end 5'-phospho-2'-deoxyribonucleoside-DNA + H(+). Involved in base excision repair of DNA damaged by oxidation or by mutagenic agents. Acts as a DNA glycosylase that recognizes and removes damaged bases. Has a preference for oxidized purines, such as 7,8-dihydro-8-oxoguanine (8-oxoG). Has AP (apurinic/apyrimidinic) lyase activity and introduces nicks in the DNA strand. Cleaves the DNA backbone by beta-delta elimination to generate a single-strand break at the site of the removed base with both 3'- and 5'-phosphates. The polypeptide is Formamidopyrimidine-DNA glycosylase (Rickettsia africae (strain ESF-5)).